The sequence spans 457 residues: Serine--tRNA ligase (457 aa).

An L-serine-binding site is contributed by threonine 252–glutamate 254. Residues arginine 283–glutamate 285 and valine 299 contribute to the ATP site. Position 306 (glutamate 306) interacts with L-serine. Residue glutamate 370 to serine 373 coordinates ATP. Threonine 406 serves as a coordination point for L-serine.

This sequence belongs to the class-II aminoacyl-tRNA synthetase family. Type-1 seryl-tRNA synthetase subfamily. Homodimer. The tRNA molecule binds across the dimer.

It localises to the cytoplasm. It catalyses the reaction tRNA(Ser) + L-serine + ATP = L-seryl-tRNA(Ser) + AMP + diphosphate + H(+). It carries out the reaction tRNA(Sec) + L-serine + ATP = L-seryl-tRNA(Sec) + AMP + diphosphate + H(+). The protein operates within aminoacyl-tRNA biosynthesis; selenocysteinyl-tRNA(Sec) biosynthesis; L-seryl-tRNA(Sec) from L-serine and tRNA(Sec): step 1/1. Its function is as follows. Catalyzes the attachment of serine to tRNA(Ser). Is also able to aminoacylate tRNA(Sec) with serine, to form the misacylated tRNA L-seryl-tRNA(Sec), which will be further converted into selenocysteinyl-tRNA(Sec). This chain is Serine--tRNA ligase, found in Saccharolobus islandicus (strain M.14.25 / Kamchatka #1) (Sulfolobus islandicus).